Reading from the N-terminus, the 185-residue chain is Ribosome-recycling factor (185 aa).

It belongs to the RRF family.

The protein resides in the cytoplasm. Functionally, responsible for the release of ribosomes from messenger RNA at the termination of protein biosynthesis. May increase the efficiency of translation by recycling ribosomes from one round of translation to another. The sequence is that of Ribosome-recycling factor from Geobacter sp. (strain M21).